We begin with the raw amino-acid sequence, 411 residues long: Argininosuccinate synthase (411 aa).

Residues 10 to 18 and Ala-37 each bind ATP; that span reads AYSGGLDTS. The L-citrulline site is built by Tyr-89 and Ser-94. Gly-119 is a binding site for ATP. L-aspartate is bound by residues Thr-121, Asn-125, and Asp-126. Asn-125 provides a ligand contact to L-citrulline. Arg-129, Ser-178, Ser-187, Glu-263, and Tyr-275 together coordinate L-citrulline.

Belongs to the argininosuccinate synthase family. Type 1 subfamily. As to quaternary structure, homotetramer.

It localises to the cytoplasm. It catalyses the reaction L-citrulline + L-aspartate + ATP = 2-(N(omega)-L-arginino)succinate + AMP + diphosphate + H(+). It functions in the pathway amino-acid biosynthesis; L-arginine biosynthesis; L-arginine from L-ornithine and carbamoyl phosphate: step 2/3. In Aeromonas salmonicida (strain A449), this protein is Argininosuccinate synthase.